The chain runs to 745 residues: AP-3 complex subunit beta (745 aa).

Position 638 is a phosphoserine (Ser-638). A disordered region spans residues 674 to 745 (YASETSESSE…TEPEPNYWQS (72 aa)). A compositionally biased stretch (acidic residues) spans 680-718 (ESSEGEYETSTSESEDEETDDTSQEEDNEKNSTPDEDTE).

Belongs to the adaptor complexes large subunit family. Adaptor protein complex 3 (AP-3) is a heterotetramer composed of 2 large adaptins (apl5 and apl6), a medium adaptin (apm3) and a small adaptin (aps3).

It is found in the golgi apparatus. It localises to the cytoplasmic vesicle. Its subcellular location is the clathrin-coated vesicle membrane. Its function is as follows. Adaptins are components of the adaptor complexes which link clathrin to receptors in coated vesicles. Clathrin-associated protein complexes are believed to interact with the cytoplasmic tails of membrane proteins, leading to their selection and concentration. Beta adaptin is a subunit of the plasma membrane adaptor. The protein is AP-3 complex subunit beta (apl6) of Schizosaccharomyces pombe (strain 972 / ATCC 24843) (Fission yeast).